A 346-amino-acid polypeptide reads, in one-letter code: L-threonine dehydratase catabolic TdcB (346 aa).

59–60 (FT) is an AMP binding site. K64 carries the N6-(pyridoxal phosphate)lysine modification. AMP contacts are provided by residues Q94, 125-126 (GY), and N321.

Belongs to the serine/threonine dehydratase family. In the native structure, TdcB is in a dimeric form, whereas in the TdcB-AMP complex, it exists in a tetrameric form (dimer of dimers). Pyridoxal 5'-phosphate serves as cofactor.

It carries out the reaction L-threonine = 2-oxobutanoate + NH4(+). The protein operates within amino-acid degradation; L-threonine degradation via propanoate pathway; propanoate from L-threonine: step 1/4. With respect to regulation, each protein molecule can bind up to four molecules of AMP, which act as an allosteric activator to the enzyme. Its function is as follows. Catalyzes the anaerobic formation of alpha-ketobutyrate and ammonia from threonine in a two-step reaction. The first step involved a dehydration of threonine and a production of enamine intermediates (aminocrotonate), which tautomerizes to its imine form (iminobutyrate). Both intermediates are unstable and short-lived. The second step is the nonenzymatic hydrolysis of the enamine/imine intermediates to form 2-ketobutyrate and free ammonia. In the low water environment of the cell, the second step is accelerated by RidA. This is L-threonine dehydratase catabolic TdcB (tdcB) from Staphylococcus aureus (strain bovine RF122 / ET3-1).